Consider the following 94-residue polypeptide: Large ribosomal subunit protein uL23 (94 aa).

This sequence belongs to the universal ribosomal protein uL23 family. As to quaternary structure, part of the 50S ribosomal subunit. Contacts protein L29, and trigger factor when it is bound to the ribosome.

Functionally, one of the early assembly proteins it binds 23S rRNA. One of the proteins that surrounds the polypeptide exit tunnel on the outside of the ribosome. Forms the main docking site for trigger factor binding to the ribosome. The protein is Large ribosomal subunit protein uL23 of Treponema denticola (strain ATCC 35405 / DSM 14222 / CIP 103919 / JCM 8153 / KCTC 15104).